A 178-amino-acid chain; its full sequence is Crossover junction endodeoxyribonuclease RuvC (178 aa).

Active-site residues include Asp8, Glu72, and Asp144. Asp8, Glu72, and Asp144 together coordinate Mg(2+).

This sequence belongs to the RuvC family. Homodimer which binds Holliday junction (HJ) DNA. The HJ becomes 2-fold symmetrical on binding to RuvC with unstacked arms; it has a different conformation from HJ DNA in complex with RuvA. In the full resolvosome a probable DNA-RuvA(4)-RuvB(12)-RuvC(2) complex forms which resolves the HJ. The cofactor is Mg(2+).

It localises to the cytoplasm. It catalyses the reaction Endonucleolytic cleavage at a junction such as a reciprocal single-stranded crossover between two homologous DNA duplexes (Holliday junction).. Functionally, the RuvA-RuvB-RuvC complex processes Holliday junction (HJ) DNA during genetic recombination and DNA repair. Endonuclease that resolves HJ intermediates. Cleaves cruciform DNA by making single-stranded nicks across the HJ at symmetrical positions within the homologous arms, yielding a 5'-phosphate and a 3'-hydroxyl group; requires a central core of homology in the junction. The consensus cleavage sequence is 5'-(A/T)TT(C/G)-3'. Cleavage occurs on the 3'-side of the TT dinucleotide at the point of strand exchange. HJ branch migration catalyzed by RuvA-RuvB allows RuvC to scan DNA until it finds its consensus sequence, where it cleaves and resolves the cruciform DNA. The protein is Crossover junction endodeoxyribonuclease RuvC of Idiomarina loihiensis (strain ATCC BAA-735 / DSM 15497 / L2-TR).